A 229-amino-acid polypeptide reads, in one-letter code: Endonuclease V (229 aa).

Positions 36 and 104 each coordinate Mg(2+).

This sequence belongs to the endonuclease V family. Mg(2+) serves as cofactor.

The protein localises to the cytoplasm. It carries out the reaction Endonucleolytic cleavage at apurinic or apyrimidinic sites to products with a 5'-phosphate.. DNA repair enzyme involved in the repair of deaminated bases. Selectively cleaves double-stranded DNA at the second phosphodiester bond 3' to a deoxyinosine leaving behind the intact lesion on the nicked DNA. This is Endonuclease V from Pectobacterium carotovorum subsp. carotovorum (strain PC1).